The primary structure comprises 381 residues: Chaperone protein DnaJ (381 aa).

The J domain occupies aspartate 5–glycine 70. The CR-type zinc-finger motif lies at glycine 136–threonine 214. Cysteine 149, cysteine 152, cysteine 166, cysteine 169, cysteine 188, cysteine 191, cysteine 202, and cysteine 205 together coordinate Zn(2+). CXXCXGXG motif repeat units lie at residues cysteine 149 to glycine 156, cysteine 166 to glycine 173, cysteine 188 to glycine 195, and cysteine 202 to glycine 209.

Belongs to the DnaJ family. In terms of assembly, homodimer. Zn(2+) serves as cofactor.

Its subcellular location is the cytoplasm. Participates actively in the response to hyperosmotic and heat shock by preventing the aggregation of stress-denatured proteins and by disaggregating proteins, also in an autonomous, DnaK-independent fashion. Unfolded proteins bind initially to DnaJ; upon interaction with the DnaJ-bound protein, DnaK hydrolyzes its bound ATP, resulting in the formation of a stable complex. GrpE releases ADP from DnaK; ATP binding to DnaK triggers the release of the substrate protein, thus completing the reaction cycle. Several rounds of ATP-dependent interactions between DnaJ, DnaK and GrpE are required for fully efficient folding. Also involved, together with DnaK and GrpE, in the DNA replication of plasmids through activation of initiation proteins. The sequence is that of Chaperone protein DnaJ from Vibrio parahaemolyticus serotype O3:K6 (strain RIMD 2210633).